Reading from the N-terminus, the 339-residue chain is Anthranilate phosphoribosyltransferase (339 aa).

Residues Gly-79, 82–83 (GD), Thr-87, 89–92 (NVST), 107–115 (KHGNRSVSS), and Ser-119 contribute to the 5-phospho-alpha-D-ribose 1-diphosphate site. Gly-79 provides a ligand contact to anthranilate. Ser-91 is a binding site for Mg(2+). Asn-110 is a binding site for anthranilate. Arg-165 is a binding site for anthranilate. 2 residues coordinate Mg(2+): Asp-224 and Glu-225.

This sequence belongs to the anthranilate phosphoribosyltransferase family. In terms of assembly, homodimer. Mg(2+) is required as a cofactor.

The enzyme catalyses N-(5-phospho-beta-D-ribosyl)anthranilate + diphosphate = 5-phospho-alpha-D-ribose 1-diphosphate + anthranilate. It functions in the pathway amino-acid biosynthesis; L-tryptophan biosynthesis; L-tryptophan from chorismate: step 2/5. Catalyzes the transfer of the phosphoribosyl group of 5-phosphorylribose-1-pyrophosphate (PRPP) to anthranilate to yield N-(5'-phosphoribosyl)-anthranilate (PRA). This Caldivirga maquilingensis (strain ATCC 700844 / DSM 13496 / JCM 10307 / IC-167) protein is Anthranilate phosphoribosyltransferase.